The primary structure comprises 503 residues: Maturase K (503 aa).

Belongs to the intron maturase 2 family. MatK subfamily.

Its subcellular location is the plastid. It is found in the chloroplast. Usually encoded in the trnK tRNA gene intron. Probably assists in splicing its own and other chloroplast group II introns. In Aethionema cordifolium (Lebanon stonecress), this protein is Maturase K.